The primary structure comprises 397 residues: Major outer membrane porin, serovar C (397 aa).

An N-terminal signal peptide occupies residues 1–22 (MKKLLKSVLVFAALSSASSLQA).

Belongs to the chlamydial porin (CP) (TC 1.B.2) family. As to quaternary structure, part of a disulfide cross-linked outer membrane complex (COMC) composed of the major outer membrane porin (MOMP), the small cysteine-rich protein (OmcA) and the large cysteine-rich periplasmic protein (OmcB).

It localises to the cell outer membrane. Its function is as follows. In elementary bodies (EBs, the infectious stage, which is able to survive outside the host cell) provides the structural integrity of the outer envelope through disulfide cross-links with the small cysteine-rich protein and the large cysteine-rich periplasmic protein. It has been described in publications as the Sarkosyl-insoluble COMC (Chlamydia outer membrane complex), and serves as the functional equivalent of peptidoglycan. Permits diffusion of specific solutes through the outer membrane. The polypeptide is Major outer membrane porin, serovar C (ompA) (Chlamydia trachomatis).